The following is a 322-amino-acid chain: Quinolinate synthase (322 aa).

Iminosuccinate-binding residues include H38 and S55. Position 100 (C100) interacts with [4Fe-4S] cluster. Iminosuccinate-binding positions include 126-128 (YIN) and S143. C186 contributes to the [4Fe-4S] cluster binding site. Iminosuccinate-binding positions include 212–214 (HPE) and T229. Residue C279 coordinates [4Fe-4S] cluster.

This sequence belongs to the quinolinate synthase family. Type 2 subfamily. [4Fe-4S] cluster serves as cofactor.

Its subcellular location is the cytoplasm. The enzyme catalyses iminosuccinate + dihydroxyacetone phosphate = quinolinate + phosphate + 2 H2O + H(+). The protein operates within cofactor biosynthesis; NAD(+) biosynthesis; quinolinate from iminoaspartate: step 1/1. Functionally, catalyzes the condensation of iminoaspartate with dihydroxyacetone phosphate to form quinolinate. This chain is Quinolinate synthase, found in Aquifex aeolicus (strain VF5).